Here is a 176-residue protein sequence, read N- to C-terminus: Lactoylglutathione lyase (176 aa).

Residues 23-167 enclose the VOC domain; the sequence is VFNHTMLRVK…DGYWVEIVQA (145 aa). His26 contributes to the Ni(2+) binding site. Arg30 serves as a coordination point for substrate. Residue Glu92 coordinates Ni(2+). Residues Asn96, Arg114, and His118 each coordinate substrate. Ni(2+)-binding residues include His118 and Glu163. Glu163 functions as the Proton donor/acceptor in the catalytic mechanism.

It belongs to the glyoxalase I family. In terms of assembly, monomer. Ni(2+) serves as cofactor. The cofactor is Zn(2+).

The enzyme catalyses (R)-S-lactoylglutathione = methylglyoxal + glutathione. It functions in the pathway secondary metabolite metabolism; methylglyoxal degradation; (R)-lactate from methylglyoxal: step 1/2. Its function is as follows. Catalyzes the conversion of hemimercaptal, formed from methylglyoxal and glutathione, to S-lactoylglutathione. The protein is Lactoylglutathione lyase (gloA) of Pseudomonas aeruginosa (strain ATCC 15692 / DSM 22644 / CIP 104116 / JCM 14847 / LMG 12228 / 1C / PRS 101 / PAO1).